Reading from the N-terminus, the 466-residue chain is MDQSSRYVNLALKEEDLIAGGEHVLCAYIMKPKAGYGYVATAAHFAAESSTGTNVEVCTTDDFTRGVDALVYEVDEARELTKIAYPVALFDRNITDGKAMIASFLTLTMGNNQGMGDVEYAKMHDFYVPEAYRALFDGPSVNISALWKVLGRPEVDGGLVVGTIIKPKLGLRPKPFAEACHAFWLGGDFIKNDEPQGNQPFAPLRDTIALVADAMRRAQDETGEAKLFSANITADDPFEIIARGEYVLETFGENASHVALLVDGYVAGAAAITTARRRFPDNFLHYHRAGHGAVTSPQSKRGYTAFVHCKMARLQGASGIHTGTMGFGKMEGESSDRAIAYMLTQDEAQGPFYRQSWGGMKACTPIISGGMNALRMPGFFENLGNANVILTAGGGAFGHIDGPVAGARSLRQAWQAWRDGVPVLDYAREHKELARAFESFPGDADQIYPGWRKALGVEDTRSALPA.

Residue asparagine 111 participates in substrate binding. Catalysis depends on lysine 166, which acts as the Proton acceptor. A substrate-binding site is contributed by lysine 168. Residues lysine 191, aspartate 193, and glutamate 194 each contribute to the Mg(2+) site. Lysine 191 is modified (N6-carboxylysine). The active-site Proton acceptor is the histidine 287. The substrate site is built by arginine 288, histidine 321, and serine 368.

Belongs to the RuBisCO large chain family. Type II subfamily. Homodimer. Requires Mg(2+) as cofactor.

It carries out the reaction 2 (2R)-3-phosphoglycerate + 2 H(+) = D-ribulose 1,5-bisphosphate + CO2 + H2O. The catalysed reaction is D-ribulose 1,5-bisphosphate + O2 = 2-phosphoglycolate + (2R)-3-phosphoglycerate + 2 H(+). Functionally, ruBisCO catalyzes two reactions: the carboxylation of D-ribulose 1,5-bisphosphate, the primary event in carbon dioxide fixation, as well as the oxidative fragmentation of the pentose substrate. Both reactions occur simultaneously and in competition at the same active site. The polypeptide is Ribulose bisphosphate carboxylase (Rhodospirillum rubrum (strain ATCC 11170 / ATH 1.1.1 / DSM 467 / LMG 4362 / NCIMB 8255 / S1)).